The primary structure comprises 95 residues: Co-chaperonin GroES (95 aa).

The protein belongs to the GroES chaperonin family. In terms of assembly, heptamer of 7 subunits arranged in a ring. Interacts with the chaperonin GroEL.

It localises to the cytoplasm. Together with the chaperonin GroEL, plays an essential role in assisting protein folding. The GroEL-GroES system forms a nano-cage that allows encapsulation of the non-native substrate proteins and provides a physical environment optimized to promote and accelerate protein folding. GroES binds to the apical surface of the GroEL ring, thereby capping the opening of the GroEL channel. This is Co-chaperonin GroES from Cereibacter sphaeroides (strain KD131 / KCTC 12085) (Rhodobacter sphaeroides).